The sequence spans 373 residues: Anhydro-N-acetylmuramic acid kinase (373 aa).

ATP is bound at residue 12–19 (GTSLDGVD).

Belongs to the anhydro-N-acetylmuramic acid kinase family.

It catalyses the reaction 1,6-anhydro-N-acetyl-beta-muramate + ATP + H2O = N-acetyl-D-muramate 6-phosphate + ADP + H(+). Its pathway is amino-sugar metabolism; 1,6-anhydro-N-acetylmuramate degradation. It functions in the pathway cell wall biogenesis; peptidoglycan recycling. In terms of biological role, catalyzes the specific phosphorylation of 1,6-anhydro-N-acetylmuramic acid (anhMurNAc) with the simultaneous cleavage of the 1,6-anhydro ring, generating MurNAc-6-P. Is required for the utilization of anhMurNAc either imported from the medium or derived from its own cell wall murein, and thus plays a role in cell wall recycling. The sequence is that of Anhydro-N-acetylmuramic acid kinase from Salmonella newport (strain SL254).